We begin with the raw amino-acid sequence, 127 residues long: MFAFRSIATTVVMVAASLASASAFAHPKLVVSSPVDNATVSAPATINLSFTEKLLPSLSGAELTMTKMPGMEMPPMKVAAKAAPSADGKSLIVTPDKPLSTGTYRLHWRVVSNDTHPVKGSISFSVK.

Residues 1–25 (MFAFRSIATTVVMVAASLASASAFA) form the signal peptide. Residues histidine 26, methionine 65, methionine 68, methionine 71, methionine 76, and histidine 116 each contribute to the Cu cation site.

The protein belongs to the CopC family.

It localises to the periplasm. Copper-binding protein involved in copper resistance. The polypeptide is Copper resistance protein C (Xanthomonas campestris pv. juglandis (Xanthomonas arboricola pv. juglandis)).